Consider the following 100-residue polypeptide: Aspartyl/glutamyl-tRNA(Asn/Gln) amidotransferase subunit C (100 aa).

Belongs to the GatC family. As to quaternary structure, heterotrimer of A, B and C subunits.

The enzyme catalyses L-glutamyl-tRNA(Gln) + L-glutamine + ATP + H2O = L-glutaminyl-tRNA(Gln) + L-glutamate + ADP + phosphate + H(+). It catalyses the reaction L-aspartyl-tRNA(Asn) + L-glutamine + ATP + H2O = L-asparaginyl-tRNA(Asn) + L-glutamate + ADP + phosphate + 2 H(+). In terms of biological role, allows the formation of correctly charged Asn-tRNA(Asn) or Gln-tRNA(Gln) through the transamidation of misacylated Asp-tRNA(Asn) or Glu-tRNA(Gln) in organisms which lack either or both of asparaginyl-tRNA or glutaminyl-tRNA synthetases. The reaction takes place in the presence of glutamine and ATP through an activated phospho-Asp-tRNA(Asn) or phospho-Glu-tRNA(Gln). This Streptococcus equi subsp. zooepidemicus (strain H70) protein is Aspartyl/glutamyl-tRNA(Asn/Gln) amidotransferase subunit C.